A 178-amino-acid polypeptide reads, in one-letter code: MDDTLNQANPSMSRRQLLNFFTGAIVATTASAAIYPATKFFMPPAESTDAEGGILAQDKIGHPIPASQILAQASGTRALIAGLAGEPTYLTVREDGTLDPMGIVNNCTHLGCTFPWNPVDQQFQCPCHGSRYDAQGSVERGPANRPLKLVQVQVKDDYIWISPWQETDPRTGEKPWWV.

The helical transmembrane segment at 17-36 threads the bilayer; the sequence is LLNFFTGAIVATTASAAIYP. The Rieske domain maps to 61–161; sequence GHPIPASQIL…VQVKDDYIWI (101 aa). [2Fe-2S] cluster-binding residues include Cys-107, His-109, Cys-125, and His-128. A disulfide bridge links Cys-112 with Cys-127.

The protein belongs to the Rieske iron-sulfur protein family. In terms of assembly, the 4 large subunits of the cytochrome b6-f complex are cytochrome b6, subunit IV (17 kDa polypeptide, PetD), cytochrome f and the Rieske protein, while the 4 small subunits are PetG, PetL, PetM and PetN. The complex functions as a dimer. The cofactor is [2Fe-2S] cluster.

The protein resides in the cellular thylakoid membrane. It carries out the reaction 2 oxidized [plastocyanin] + a plastoquinol + 2 H(+)(in) = 2 reduced [plastocyanin] + a plastoquinone + 4 H(+)(out). Component of the cytochrome b6-f complex, which mediates electron transfer between photosystem II (PSII) and photosystem I (PSI), cyclic electron flow around PSI, and state transitions. The protein is Cytochrome b6-f complex iron-sulfur subunit 2 of Nostoc sp. (strain PCC 7120 / SAG 25.82 / UTEX 2576).